The sequence spans 259 residues: Ribosomal RNA small subunit methyltransferase A (259 aa).

Residues Asn13, Leu15, Gly40, Glu61, Asp85, and Asn103 each coordinate S-adenosyl-L-methionine.

It belongs to the class I-like SAM-binding methyltransferase superfamily. rRNA adenine N(6)-methyltransferase family. RsmA subfamily.

It is found in the cytoplasm. The enzyme catalyses adenosine(1518)/adenosine(1519) in 16S rRNA + 4 S-adenosyl-L-methionine = N(6)-dimethyladenosine(1518)/N(6)-dimethyladenosine(1519) in 16S rRNA + 4 S-adenosyl-L-homocysteine + 4 H(+). In terms of biological role, specifically dimethylates two adjacent adenosines (A1518 and A1519) in the loop of a conserved hairpin near the 3'-end of 16S rRNA in the 30S particle. May play a critical role in biogenesis of 30S subunits. The polypeptide is Ribosomal RNA small subunit methyltransferase A (Neisseria meningitidis serogroup A / serotype 4A (strain DSM 15465 / Z2491)).